The chain runs to 179 residues: 3-hydroxyanthranilate 3,4-dioxygenase (179 aa).

Position 47 (arginine 47) interacts with O2. Fe cation contacts are provided by histidine 51, glutamate 57, and histidine 96. Glutamate 57 contributes to the substrate binding site. Arginine 100 and glutamate 110 together coordinate substrate. Cysteine 125, cysteine 128, cysteine 162, and cysteine 165 together coordinate Fe cation.

It belongs to the 3-HAO family. Fe(2+) is required as a cofactor.

The catalysed reaction is 3-hydroxyanthranilate + O2 = (2Z,4Z)-2-amino-3-carboxymuconate 6-semialdehyde. The protein operates within cofactor biosynthesis; NAD(+) biosynthesis; quinolinate from L-kynurenine: step 3/3. Catalyzes the oxidative ring opening of 3-hydroxyanthranilate to 2-amino-3-carboxymuconate semialdehyde, which spontaneously cyclizes to quinolinate. In Bacillus thuringiensis (strain Al Hakam), this protein is 3-hydroxyanthranilate 3,4-dioxygenase.